Reading from the N-terminus, the 186-residue chain is uncharacterized protein (186 aa).

This is an uncharacterized protein from Mycoplasma genitalium (strain ATCC 33530 / DSM 19775 / NCTC 10195 / G37) (Mycoplasmoides genitalium).